Reading from the N-terminus, the 1020-residue chain is Carbamoyl phosphate synthase arginine-specific large chain (1020 aa).

Residues 1–401 are carboxyphosphate synthetic domain; the sequence is MPKNNAIHSI…ATLKAIASLE (401 aa). ATP-binding residues include Arg129, Arg169, Gly175, Gly176, Gln208, Ile210, Glu215, Gly241, Ile242, His243, Gln284, and Glu298. One can recognise an ATP-grasp 1 domain in the interval 133–327; the sequence is KTLMKRLHQP…IAKIAADIAI (195 aa). Residues Gln284, Glu298, and Asn300 each coordinate Mg(2+). Residues Gln284, Glu298, and Asn300 each contribute to the Mn(2+) site. 2 oligomerization domain regions span residues 402-542 and 402-544; these read IDPK…FGQT and IDPK…QTNE. Carbamoyl phosphate synthetic domain stretches follow at residues 543–927 and 544–927; these read NESH…ADSY and ESHP…ADSY. One can recognise an ATP-grasp 2 domain in the interval 669–858; the sequence is ADCLRLLKIA…LAQLATRLIL (190 aa). ATP-binding residues include Arg705, Gln744, Leu746, Glu750, Gly775, Val776, His777, Ser778, and Gln818. Gln818 and Asn831 together coordinate Mg(2+). Residues Gln818 and Asn831 each contribute to the Mn(2+) site. An MGS-like domain is found at 927–1020; that stretch reads YHLETWQTVD…LAVTPTPATI (94 aa). Residues 928–1020 form an allosteric domain region; the sequence is HLETWQTVDG…LAVTPTPATI (93 aa).

Belongs to the CarB family. As to quaternary structure, composed of two chains; the small (or glutamine) chain promotes the hydrolysis of glutamine to ammonia, which is used by the large (or ammonia) chain to synthesize carbamoyl phosphate. Tetramer of heterodimers (alpha,beta)4. Mg(2+) is required as a cofactor. The cofactor is Mn(2+).

The enzyme catalyses hydrogencarbonate + L-glutamine + 2 ATP + H2O = carbamoyl phosphate + L-glutamate + 2 ADP + phosphate + 2 H(+). It carries out the reaction hydrogencarbonate + NH4(+) + 2 ATP = carbamoyl phosphate + 2 ADP + phosphate + 2 H(+). It functions in the pathway amino-acid biosynthesis; L-arginine biosynthesis; carbamoyl phosphate from bicarbonate: step 1/1. Functionally, large subunit of the glutamine-dependent carbamoyl phosphate synthetase (CPSase). CPSase catalyzes the formation of carbamoyl phosphate from the ammonia moiety of glutamine, carbonate, and phosphate donated by ATP, constituting the first step of the biosynthetic pathway leading to arginine and/or urea. The large subunit (synthetase) binds the substrates ammonia (free or transferred from glutamine from the small subunit), hydrogencarbonate and ATP and carries out an ATP-coupled ligase reaction, activating hydrogencarbonate by forming carboxy phosphate which reacts with ammonia to form carbamoyl phosphate. The polypeptide is Carbamoyl phosphate synthase arginine-specific large chain (Lactiplantibacillus plantarum (strain ATCC BAA-793 / NCIMB 8826 / WCFS1) (Lactobacillus plantarum)).